A 962-amino-acid chain; its full sequence is UBP9-binding protein bun107 (962 aa).

WD repeat units follow at residues 25 to 69 (DANC…GKAS), 77 to 116 (AHSAWVNDIALTHDSEGVISCSSDSTVKLWKPHVLNASCL), 121 to 162 (EHTD…EVMR), 172 to 211 (VVGPRSGVYSLAANNNIIANGGLQKDIQLWDCVSKKRITD), 214 to 253 (GHTDNVRDILISDDGRTILTASSDATIKLWSLRAQKCLFS), and 302 to 339 (KQDAPVSDIVARQSFIWSTSRDGSILRWKDEPLFNQDV). Residues 568–578 (SPLRIRSRPSP) are compositionally biased toward low complexity. Disordered stretches follow at residues 568 to 615 (SPLR…QIPS) and 702 to 758 (RAAS…PREL). The span at 707-723 (RVFSTGTSVTSPQALSK) shows a compositional bias: polar residues. Residue Ser717 is modified to Phosphoserine. Residues 724-738 (TNNTVNNAANTENNT) show a composition bias toward low complexity.

Interacts with ubp9 and bun62.

Its subcellular location is the cytoplasm. It is found in the cell tip. In terms of biological role, required for the ubp9 recruitment to septa and cell tips but also for its enzymatic activity at these specific locations. This chain is UBP9-binding protein bun107 (bun107), found in Schizosaccharomyces pombe (strain 972 / ATCC 24843) (Fission yeast).